The sequence spans 428 residues: 26S proteasome regulatory subunit 6B homolog (428 aa).

The residue at position 1 (methionine 1) is an N-acetylmethionine. An ATP-binding site is contributed by 213–220 (GPPGTGKT). Lysine 280 is covalently cross-linked (Glycyl lysine isopeptide (Lys-Gly) (interchain with G-Cter in ubiquitin)).

It belongs to the AAA ATPase family. In terms of processing, N-acetylated by NAT3.

The protein resides in the cytoplasm. It localises to the nucleus. The 26S proteasome is involved in the ATP-dependent degradation of ubiquitinated proteins. The regulatory (or ATPase) complex confers ATP dependency and substrate specificity to the 26S complex. The polypeptide is 26S proteasome regulatory subunit 6B homolog (RPT3) (Saccharomyces cerevisiae (strain ATCC 204508 / S288c) (Baker's yeast)).